The primary structure comprises 345 residues: 4-hydroxy-2-oxovalerate aldolase 3 (345 aa).

The Pyruvate carboxyltransferase domain occupies 8-260 (ITVHDMTLRD…ETGVDVWKIQ (253 aa)). 16–17 (RD) is a binding site for substrate. D17 contributes to the Mn(2+) binding site. Residue H20 is the Proton acceptor of the active site. Residues S170 and H199 each coordinate substrate. The Mn(2+) site is built by H199 and H201. Y290 provides a ligand contact to substrate.

It belongs to the 4-hydroxy-2-oxovalerate aldolase family.

The catalysed reaction is (S)-4-hydroxy-2-oxopentanoate = acetaldehyde + pyruvate. This chain is 4-hydroxy-2-oxovalerate aldolase 3 (aphG), found in Comamonas testosteroni (Pseudomonas testosteroni).